Reading from the N-terminus, the 199-residue chain is uncharacterized protein (199 aa).

The first 23 residues, Met1–Ala23, serve as a signal peptide directing secretion.

This is an uncharacterized protein from Escherichia coli (strain K12).